The sequence spans 486 residues: H2.0-like homeobox protein (486 aa).

Disordered regions lie at residues 83-173 (ASFQ…SSKD) and 330-486 (KWRH…LGGL). The segment covering 125–135 (QQQQQQQQPQQ) has biased composition (low complexity). The segment at residues 276–335 (RSWSRAVFSNLQRKGLEKRFEIQKYVTKPDRKQLAAMLGLTDAQVKVWFQNRRMKWRHSK) is a DNA-binding region (homeobox). 2 stretches are compositionally biased toward basic and acidic residues: residues 334-349 (SKEA…EAGE) and 363-372 (EERSPSRSEG). Over residues 373–383 (EAESESSDPES) the composition is skewed to acidic residues. Over residues 390 to 401 (DTERTEGTERSL) the composition is skewed to basic and acidic residues. Residues 409 to 420 (ASAAGALLAASS) are compositionally biased toward low complexity. The span at 421–440 (GGSGGSGGGGGGGFNFGGLS) shows a compositional bias: gly residues. Residues 441–474 (SGSTTSAGSSGSHSSGGASELLPAPQPSLSSAPK) are compositionally biased toward low complexity. Pro residues predominate over residues 475-486 (SPEPVPAPLGGL).

It belongs to the H2.0 homeobox family.

The protein localises to the nucleus. In terms of biological role, transcription factor required for TBX21/T-bet-dependent maturation of Th1 cells as well as maintenance of Th1-specific gene expression. Involved in embryogenesis and hematopoiesis. The chain is H2.0-like homeobox protein (HLX) from Bos taurus (Bovine).